The chain runs to 615 residues: Glutamine--fructose-6-phosphate aminotransferase [isomerizing] (615 aa).

The Nucleophile; for GATase activity role is filled by C2. Positions 2-220 (CGIVGYVGPQ…QDQVVELRRD (219 aa)) constitute a Glutamine amidotransferase type-2 domain. SIS domains follow at residues 287–427 (IPPG…VRGT) and 460–605 (LARS…VDQP). The For Fru-6P isomerization activity role is filled by K610.

In terms of assembly, homodimer.

Its subcellular location is the cytoplasm. The catalysed reaction is D-fructose 6-phosphate + L-glutamine = D-glucosamine 6-phosphate + L-glutamate. Its function is as follows. Catalyzes the first step in hexosamine metabolism, converting fructose-6P into glucosamine-6P using glutamine as a nitrogen source. The chain is Glutamine--fructose-6-phosphate aminotransferase [isomerizing] from Streptomyces coelicolor (strain ATCC BAA-471 / A3(2) / M145).